A 362-amino-acid chain; its full sequence is GDSL esterase/lipase At5g45670 (362 aa).

A signal peptide spans 1 to 23 (MARMSLMIMMIMVAVTMINIAKS). S36 (nucleophile) is an active-site residue. Active-site residues include D326 and H329.

This sequence belongs to the 'GDSL' lipolytic enzyme family.

Its subcellular location is the secreted. In Arabidopsis thaliana (Mouse-ear cress), this protein is GDSL esterase/lipase At5g45670.